The following is a 622-amino-acid chain: Glucose 1,6-bisphosphate synthase (622 aa).

Residues Arg-73 and Ser-175 each coordinate alpha-D-glucose 1,6-bisphosphate. The Phosphoserine intermediate role is filled by Ser-175. Ser-175, Asp-332, and Asp-334 together coordinate Mg(2+). Ser-175 bears the Phosphoserine mark. Alpha-D-glucose 1,6-bisphosphate-binding residues include Asp-336, Arg-337, Glu-434, Ser-436, and Lys-448.

The protein belongs to the phosphohexose mutase family.

The protein localises to the cytoplasm. The protein resides in the cytosol. It catalyses the reaction (2R)-3-phospho-glyceroyl phosphate + alpha-D-glucose 1-phosphate = alpha-D-glucose 1,6-bisphosphate + (2R)-3-phosphoglycerate + H(+). The catalysed reaction is alpha-D-glucose 6-phosphate + (2R)-3-phospho-glyceroyl phosphate = alpha-D-glucose 1,6-bisphosphate + (2R)-3-phosphoglycerate + H(+). It carries out the reaction (2R)-3-phospho-glyceroyl phosphate + alpha-D-ribose 1-phosphate = alpha-D-ribose 1,5-bisphosphate + (2R)-3-phosphoglycerate + H(+). The enzyme catalyses 2-deoxy-alpha-D-ribose 1-phosphate + (2R)-3-phospho-glyceroyl phosphate = 2-deoxy-alpha-D-ribose 1,5-bisphosphate + (2R)-3-phosphoglycerate + H(+). It catalyses the reaction (2R)-3-phospho-glyceroyl phosphate + alpha-D-mannose 1-phosphate = alpha-D-mannose 1,6-bisphosphate + (2R)-3-phosphoglycerate + H(+). Glucose 1,6-bisphosphate synthase using 1,3-bisphosphoglycerate as a phosphate donor and a series of 1-phosphate sugars, including glucose 1-phosphate, mannose 1-phosphate, ribose 1-phosphate and deoxyribose 1-phosphate, as acceptors. In vitro, also exhibits very low phosphopentomutase and phosphoglucomutase activity which are most probably not physiologically relevant. In Homo sapiens (Human), this protein is Glucose 1,6-bisphosphate synthase.